The following is a 273-amino-acid chain: Transcriptional regulator ICP22 homolog (273 aa).

2 disordered regions span residues 1-57 (GSCR…YGLP) and 160-273 (YEQR…SARR). Residues 11–33 (PSTSPIIPSLSPSSGGNPSPRSS) are compositionally biased toward low complexity. Acidic residues-rich tracts occupy residues 178–194 (EECE…EEEA) and 204–224 (SPEE…EDDS). Residues 261–273 (VPKGGRPAKSARR) show a composition bias toward low complexity.

This sequence belongs to the herpesviridae ICP22 family.

The sequence is that of Transcriptional regulator ICP22 homolog from Equus caballus (Horse).